The primary structure comprises 120 residues: Protein crumbs homolog 3 (120 aa).

A signal peptide spans 1–26; it reads MANPGLGLLLALGLPFLLARWGRAWG. Residues 27 to 59 are Extracellular-facing; the sequence is QIQTTSANENSTVLPSSTSSSSDGNLRPEAITA. An N-linked (GlcNAc...) asparagine glycan is attached at asparagine 36. Residues 60–80 traverse the membrane as a helical segment; sequence IIVVFSLLAALLLAVGLALLV. Residues 81 to 120 lie on the Cytoplasmic side of the membrane; that stretch reads RKLREKRQTEGTYRPSSEEQVGARVPPTPNLKLPPEERLI. Residues 84–120 form an interaction with EPB41L5 region; the sequence is REKRQTEGTYRPSSEEQVGARVPPTPNLKLPPEERLI. Residues 87-120 are disordered; the sequence is RQTEGTYRPSSEEQVGARVPPTPNLKLPPEERLI. A compositionally biased stretch (polar residues) spans 90–99; sequence EGTYRPSSEE. A PDZ-binding motif is present at residues 117–120; it reads ERLI.

As to quaternary structure, component of a complex composed of CRB3, PALS1 and PATJ. Interacts (via C-terminus) with PALS1 (via PDZ domain). Interacts with PARD6A. Interacts (via intracellular domain) with EPB41L5. Interacts with WDR83. As to expression, preferentially expressed in epithelial tissues. Expressed at high levels in lung, kidney, and colon. Expressed at high levels in retina, colon and mammary glands. Moderately expressed in liver, spleen, pancreas and prostate. Moderately to weakly expressed in the placenta. Weakly expressed in skeletal muscle and small intestine.

The protein resides in the apical cell membrane. Its subcellular location is the cell junction. It localises to the tight junction. Its function is as follows. Involved in the establishment of cell polarity in mammalian epithelial cells. Regulates the morphogenesis of tight junctions. Involved in promoting phosphorylation and cytoplasmic retention of transcriptional coactivators YAP1 and WWTR1/TAZ which leads to suppression of TGFB1-dependent transcription of target genes such as CCN2/CTGF, SERPINE1/PAI1, SNAI1/SNAIL1 and SMAD7. This Homo sapiens (Human) protein is Protein crumbs homolog 3.